Reading from the N-terminus, the 325-residue chain is L-lactate dehydrogenase (325 aa).

Residues valine 19, aspartate 40, lysine 45, tyrosine 70, and 84–85 each bind NAD(+); that span reads GA. Positions 87 and 93 each coordinate substrate. Residues threonine 106, 123–125, and serine 148 contribute to the NAD(+) site; that span reads AAN. 125–128 lines the substrate pocket; the sequence is NPVD. Residue 153-156 coordinates substrate; that stretch reads DSAR. Residues arginine 158 and histidine 173 each coordinate beta-D-fructose 1,6-bisphosphate. The active-site Proton acceptor is histidine 180. Tyrosine 225 bears the Phosphotyrosine mark. Threonine 234 serves as a coordination point for substrate.

This sequence belongs to the LDH/MDH superfamily. LDH family. As to quaternary structure, homotetramer.

The protein localises to the cytoplasm. It carries out the reaction (S)-lactate + NAD(+) = pyruvate + NADH + H(+). It functions in the pathway fermentation; pyruvate fermentation to lactate; (S)-lactate from pyruvate: step 1/1. With respect to regulation, allosterically activated by fructose 1,6-bisphosphate (FBP). Catalyzes the conversion of lactate to pyruvate. This chain is L-lactate dehydrogenase, found in Latilactobacillus sakei subsp. sakei (strain 23K) (Lactobacillus sakei subsp. sakei).